The following is a 377-amino-acid chain: Anhydro-N-acetylmuramic acid kinase (377 aa).

12-19 (GTSLDGID) contacts ATP.

It belongs to the anhydro-N-acetylmuramic acid kinase family.

It catalyses the reaction 1,6-anhydro-N-acetyl-beta-muramate + ATP + H2O = N-acetyl-D-muramate 6-phosphate + ADP + H(+). Its pathway is amino-sugar metabolism; 1,6-anhydro-N-acetylmuramate degradation. The protein operates within cell wall biogenesis; peptidoglycan recycling. Functionally, catalyzes the specific phosphorylation of 1,6-anhydro-N-acetylmuramic acid (anhMurNAc) with the simultaneous cleavage of the 1,6-anhydro ring, generating MurNAc-6-P. Is required for the utilization of anhMurNAc either imported from the medium or derived from its own cell wall murein, and thus plays a role in cell wall recycling. This chain is Anhydro-N-acetylmuramic acid kinase, found in Methylorubrum extorquens (strain CM4 / NCIMB 13688) (Methylobacterium extorquens).